The sequence spans 273 residues: Ribosomal RNA small subunit methyltransferase A (273 aa).

S-adenosyl-L-methionine contacts are provided by Asn18, Leu20, Gly45, Glu66, Asp91, and Asn113.

The protein belongs to the class I-like SAM-binding methyltransferase superfamily. rRNA adenine N(6)-methyltransferase family. RsmA subfamily.

The protein resides in the cytoplasm. The catalysed reaction is adenosine(1518)/adenosine(1519) in 16S rRNA + 4 S-adenosyl-L-methionine = N(6)-dimethyladenosine(1518)/N(6)-dimethyladenosine(1519) in 16S rRNA + 4 S-adenosyl-L-homocysteine + 4 H(+). Its function is as follows. Specifically dimethylates two adjacent adenosines (A1518 and A1519) in the loop of a conserved hairpin near the 3'-end of 16S rRNA in the 30S particle. May play a critical role in biogenesis of 30S subunits. The protein is Ribosomal RNA small subunit methyltransferase A of Escherichia coli O157:H7.